The primary structure comprises 159 residues: S-ribosylhomocysteine lyase (159 aa).

3 residues coordinate Fe cation: H53, H57, and C124.

It belongs to the LuxS family. As to quaternary structure, homodimer. Requires Fe cation as cofactor.

It catalyses the reaction S-(5-deoxy-D-ribos-5-yl)-L-homocysteine = (S)-4,5-dihydroxypentane-2,3-dione + L-homocysteine. Functionally, involved in the synthesis of autoinducer 2 (AI-2) which is secreted by bacteria and is used to communicate both the cell density and the metabolic potential of the environment. The regulation of gene expression in response to changes in cell density is called quorum sensing. Catalyzes the transformation of S-ribosylhomocysteine (RHC) to homocysteine (HC) and 4,5-dihydroxy-2,3-pentadione (DPD). The polypeptide is S-ribosylhomocysteine lyase (Desulfotalea psychrophila (strain LSv54 / DSM 12343)).